Here is a 374-residue protein sequence, read N- to C-terminus: Inner membrane transport permease YhhJ (374 aa).

The Cytoplasmic segment spans residues 1–22 (MRHLRNIFNLGIKELRSLLGDK). The helical transmembrane segment at 23-43 (AMLTLIVFSFTVSVYSSATVT) threads the bilayer. Topologically, residues 44–172 (PGSLNLAPIA…TRMRFNPNLD (129 aa)) are periplasmic. The region spanning 133-369 (NGYIQNIING…TIALLRFRKT (237 aa)) is the ABC transmembrane type-2 domain. Residues 173-193 (PAWFGGVMAIINNITMLAIVL) form a helical membrane-spanning segment. At 194–229 (TGSALIREREHGTVEHLLVMPITPFEIMMAKIWSMG) the chain is on the cytoplasmic side. A helical membrane pass occupies residues 230–250 (LVVLVVSGLSLVLMVKGVLGV). The Periplasmic portion of the chain corresponds to 251-255 (PIEGS). The chain crosses the membrane as a helical span at residues 256–276 (IPLFMLGVALSLFATTSIGIF). At 277–283 (MGTIARS) the chain is on the cytoplasmic side. A helical membrane pass occupies residues 284–304 (MPQLGLLVILVLLPLQMLSGG). Residues 305–342 (STPRESMPQMVQDIMLTMPTTHFVSLAQAILYRGAGFE) are Periplasmic-facing. Residues 343–363 (IVWPQFLTLMAIGGAFFTIAL) form a helical membrane-spanning segment. Over 364-374 (LRFRKTIGTMA) the chain is Cytoplasmic.

Belongs to the ABC-2 integral membrane protein family.

The protein localises to the cell inner membrane. This is Inner membrane transport permease YhhJ (yhhJ) from Escherichia coli (strain K12).